An 813-amino-acid chain; its full sequence is Leucine--tRNA ligase (813 aa).

Residues 41 to 51 carry the 'HIGH' region motif; that stretch reads PYPSGTLHMGH. Positions 575–579 match the 'KMSKS' region motif; that stretch reads KMSKS. Lys-578 serves as a coordination point for ATP.

Belongs to the class-I aminoacyl-tRNA synthetase family.

It localises to the cytoplasm. It carries out the reaction tRNA(Leu) + L-leucine + ATP = L-leucyl-tRNA(Leu) + AMP + diphosphate. The sequence is that of Leucine--tRNA ligase from Francisella tularensis subsp. holarctica (strain FTNF002-00 / FTA).